A 72-amino-acid chain; its full sequence is Translation initiation factor IF-1 (72 aa).

An S1-like domain is found at 1-72; sequence MAKDDVIEID…DKGRITFRYK (72 aa).

Belongs to the IF-1 family. As to quaternary structure, component of the 30S ribosomal translation pre-initiation complex which assembles on the 30S ribosome in the order IF-2 and IF-3, IF-1 and N-formylmethionyl-tRNA(fMet); mRNA recruitment can occur at any time during PIC assembly.

The protein resides in the cytoplasm. Its function is as follows. One of the essential components for the initiation of protein synthesis. Stabilizes the binding of IF-2 and IF-3 on the 30S subunit to which N-formylmethionyl-tRNA(fMet) subsequently binds. Helps modulate mRNA selection, yielding the 30S pre-initiation complex (PIC). Upon addition of the 50S ribosomal subunit IF-1, IF-2 and IF-3 are released leaving the mature 70S translation initiation complex. The sequence is that of Translation initiation factor IF-1 from Sulfurovum sp. (strain NBC37-1).